A 137-amino-acid chain; its full sequence is Glutamate mutase sigma subunit (137 aa).

Residues 3-137 form the B12-binding domain; that stretch reads EVNLVLGVIG…KALKEDLGLM (135 aa). Residues 13 to 17, H16, 61 to 63, and 93 to 97 each bind adenosylcob(III)alamin; these read ADVHA, SSL, and NLVVG.

This sequence belongs to the methylaspartate mutase GlmS subunit family. In terms of assembly, heterotetramer composed of 2 epsilon subunits (GlmE) and 2 sigma subunits (GlmS). GlmE exists as a homodimer and GlmS as a monomer. Requires adenosylcob(III)alamin as cofactor.

It catalyses the reaction (2S,3S)-3-methyl-L-aspartate = L-glutamate. The protein operates within amino-acid degradation; L-glutamate degradation via mesaconate pathway; acetate and pyruvate from L-glutamate: step 1/4. Functionally, catalyzes the carbon skeleton rearrangement of L-glutamate to L-threo-3-methylaspartate ((2S,3S)-3-methylaspartate). The chain is Glutamate mutase sigma subunit from Carboxydothermus hydrogenoformans (strain ATCC BAA-161 / DSM 6008 / Z-2901).